Reading from the N-terminus, the 88-residue chain is Acylphosphatase (88 aa).

One can recognise an Acylphosphatase-like domain in the interval alanine 3–glycine 88. Residues arginine 18 and asparagine 36 contribute to the active site.

Belongs to the acylphosphatase family.

The enzyme catalyses an acyl phosphate + H2O = a carboxylate + phosphate + H(+). This is Acylphosphatase (acyP) from Xanthomonas campestris pv. campestris (strain 8004).